A 468-amino-acid polypeptide reads, in one-letter code: ATP synthase subunit beta (468 aa).

155-162 (GGAGVGKT) lines the ATP pocket.

The protein belongs to the ATPase alpha/beta chains family. In terms of assembly, F-type ATPases have 2 components, CF(1) - the catalytic core - and CF(0) - the membrane proton channel. CF(1) has five subunits: alpha(3), beta(3), gamma(1), delta(1), epsilon(1). CF(0) has three main subunits: a(1), b(2) and c(9-12). The alpha and beta chains form an alternating ring which encloses part of the gamma chain. CF(1) is attached to CF(0) by a central stalk formed by the gamma and epsilon chains, while a peripheral stalk is formed by the delta and b chains.

The protein localises to the cell membrane. It catalyses the reaction ATP + H2O + 4 H(+)(in) = ADP + phosphate + 5 H(+)(out). In terms of biological role, produces ATP from ADP in the presence of a proton gradient across the membrane. The catalytic sites are hosted primarily by the beta subunits. The chain is ATP synthase subunit beta from Streptococcus pyogenes serotype M49 (strain NZ131).